The primary structure comprises 171 residues: Protein phosphatase 1 regulatory subunit 1A (171 aa).

N-acetylmethionine is present on Met-1. The segment at 1-171 (MEPDNSPRKI…PLDSQGASLV (171 aa)) is disordered. An essential for activity region spans residues 9 to 12 (KIQF). Positions 19–29 (PHLDPEAAEQI) are enriched in basic and acidic residues. Thr-35 bears the Phosphothreonine mark. An essential for activity region spans residues 42–54 (TSDQSSPEIDEDR). A phosphoserine mark is found at Ser-43, Ser-46, Ser-47, and Ser-67. The span at 122–146 (GSASRPDTPGTAQKSAESNPKTQEQ) shows a compositional bias: polar residues. Residues 143-171 (TQEQCGVEPRTEDSSAHMLPLDSQGASLV) are interaction with PPP1R15A.

It belongs to the protein phosphatase inhibitor 1 family. In terms of assembly, interacts with PPP1R15A. In terms of processing, phosphorylation of Thr-35 is required for activity.

In terms of biological role, inhibitor of protein-phosphatase 1. This protein may be important in hormonal control of glycogen metabolism. Hormones that elevate intracellular cAMP increase I-1 activity in many tissues. I-1 activation may impose cAMP control over proteins that are not directly phosphorylated by PKA. Following a rise in intracellular calcium, I-1 is inactivated by calcineurin (or PP2B). Does not inhibit type-2 phosphatases. This is Protein phosphatase 1 regulatory subunit 1A (Ppp1r1a) from Mus musculus (Mouse).